The chain runs to 311 residues: Protease HtpX homolog 1 (311 aa).

Transmembrane regions (helical) follow at residues 12-32 and 35-55; these read IIAL…IINF and FPVI…WLIS. A Zn(2+)-binding site is contributed by His137. Glu138 is an active-site residue. His141 provides a ligand contact to Zn(2+). The next 2 membrane-spanning stretches (helical) occupy residues 159-179 and 184-204; these read ILGF…IFAV and ILVG…TFFL. Glu216 is a binding site for Zn(2+).

The protein belongs to the peptidase M48B family. Requires Zn(2+) as cofactor.

Its subcellular location is the cell membrane. This is Protease HtpX homolog 1 from Sulfurisphaera tokodaii (strain DSM 16993 / JCM 10545 / NBRC 100140 / 7) (Sulfolobus tokodaii).